The primary structure comprises 963 residues: MGKPTLLEPGHLYNVPAEHKNDIPIHYIITWIKQRLPEFGGAIPTSLADRVLIIKSRTGSGKSTALPVHVFRILRNENTHSFQKYLGRSVICTQPRVLTAVTLAKDIGASTHYPDMILGQTVGYQTKPLTEKPNRGLIYATAGVLLAQLHTMTDDEIASRYAFMIIDEAHERALGIDLMLMYIKSMLERMLQRGSIGALRIPFVILTSATIDTHKYSTYFGIGKENIILVEGRQFGVETHWPLYNTNNYIKTACETALTIHKENIHDRPTEADILIFMPGMGEIRFLSTLLNNANMDLAKEKLPLMLILPIDSEAIAQENEAYLGLKAEIKNLWVKNPLTAKVEKPLRRVIVSTVVAETGLTIETLKYVIDPGWNRSVETYYPEWAGGLITRPAAQSRIEQRKGRVGRVFPGHFYPLYTKHVFEQIPAQQYPEIITEGPGAIFLNIVVETIKKNKEGVFKAEEIDMLDPPPTDALASAIERAIVGGLLTRGEKGLQLTQLGDIASRFSFLSIEEARMCFSGYFWQAAISDIAIILAVVSVVDKKLTNLLDSKQRNGAMLAEAVLAGIPPFLQHIDNAYTNIHLLLADDLLEGLFIFEGFQHAIVYFINNKVNNLAKHLREWCEKKMLKYSSMVQILARREDILNELAIVGLNPFHQWQNRLASANAETFLKRVCTLKQCIYEAYRLNCFCYDEHRLLYTGRNGIHFSYHDTVIKNPSCIVTPRIMLAPVSKQYMEWRLEPSFVSVLDGFVNMDINFLLPRQEIPNILGGVEDEEEEEPPLPIQVFLHNYVKTHFHFSGKSFKELKMKPSQMIKFPETTLINMIPDIPKNVVQTYLEINVCHQYSFKRLIYCETFYTNMDDVQHENAVELIGLPMAAHHLTINDFNKLYRVLKPDGFLIVYDLHNSQEAYWLHSLQDALGHHTIRRDMDFHTITEWETIFKECGFSPIFSKQPSEHELFIVFKK.

In terms of domain architecture, Helicase ATP-binding spans 43 to 229 (IPTSLADRVL…FGIGKENIIL (187 aa)). 56–63 (SRTGSGKS) lines the ATP pocket. The DEAH box signature appears at 167 to 170 (DEAH). Positions 253–459 (ACETALTIHK…TIKKNKEGVF (207 aa)) constitute a Helicase C-terminal domain. Residues 521-541 (GYFWQAAISDIAIILAVVSVV) form a helical membrane-spanning segment.

This sequence belongs to the DEAD box helicase family. DEAH subfamily.

It is found in the host membrane. It localises to the virion. The enzyme catalyses ATP + H2O = ADP + phosphate + H(+). This chain is Putative RNA Helicase B962L, found in African swine fever virus (isolate Tick/Malawi/Lil 20-1/1983) (ASFV).